The chain runs to 591 residues: Pentatricopeptide repeat-containing protein At2g35130 (591 aa).

12 PPR repeats span residues 154–188, 189–223, 227–262, 263–297, 298–332, 333–367, 368–402, 403–437, 438–472, 473–507, 508–542, and 543–573; these read DVICFNLLIDAYGQKFQYKEAESLYVQLLESRYVP, TEDTYALLIKAYCMAGLIERAEVVLVEMQNHHVSP, GVTVYNAYIEGLMKRKGNTEEAIDVFQRMKRDRCKP, TTETYNLMINLYGKASKSYMSWKLYCEMRSHQCKP, NICTYTALVNAFAREGLCEKAEEIFEQLQEDGLEP, DVYVYNALMESYSRAGYPYGAAEIFSLMQHMGCEP, DRASYNIMVDAYGRAGLHSDAEAVFEEMKRLGIAP, TMKSHMLLLSAYSKARDVTKCEAIVKEMSENGVEP, DTFVLNSMLNLYGRLGQFTKMEKILAEMENGPCTA, DISTYNILINIYGKAGFLERIEELFVELKEKNFRP, DVVTWTSRIGAYSRKKLYVKCLEVFEEMIDSGCAP, and DGGTAKVLLSACSSEEQVEQVTSVLRTMHKG.

It belongs to the PPR family. P subfamily.

The polypeptide is Pentatricopeptide repeat-containing protein At2g35130 (Arabidopsis thaliana (Mouse-ear cress)).